The primary structure comprises 347 residues: MSLIDQLNQLEYEALAALEQIADLTALAEWKSAYLGKQGALSRLSRGLGALPAEERPVAGARFNAARATLEQALERAEAQLKRIARQHAFEADQVDVTLPGRAPAVGRLHPTTQMLRTIYGILGEMGFQVWESPEVETDEFNFQLLNMPPDHPARDMWDTFYVETAPGEPTLLLRTHTSPGQIYAMRANAPNPVRAILPGKCYRYEQVTARHEMQFYQVEGIAIGEQISFSDLKGTLVAFAERLYGKGVKTRFRPSYFPFTEPSVEFDIECFLCGGAGCRVCKQSGWLEILGAGMIHPVVLRNGGYDPDTVSGFAFGMGPERMAMLRYGIDDIRWFFSGDERFLQQF.

Residue Glu262 coordinates Mg(2+).

This sequence belongs to the class-II aminoacyl-tRNA synthetase family. Phe-tRNA synthetase alpha subunit type 1 subfamily. As to quaternary structure, tetramer of two alpha and two beta subunits. The cofactor is Mg(2+).

The protein localises to the cytoplasm. It carries out the reaction tRNA(Phe) + L-phenylalanine + ATP = L-phenylalanyl-tRNA(Phe) + AMP + diphosphate + H(+). In Roseiflexus sp. (strain RS-1), this protein is Phenylalanine--tRNA ligase alpha subunit.